Consider the following 144-residue polypeptide: 3-hydroxyacyl-[acyl-carrier-protein] dehydratase FabZ (144 aa).

Residue histidine 48 is part of the active site.

The protein belongs to the thioester dehydratase family. FabZ subfamily.

It localises to the cytoplasm. The enzyme catalyses a (3R)-hydroxyacyl-[ACP] = a (2E)-enoyl-[ACP] + H2O. In terms of biological role, involved in unsaturated fatty acids biosynthesis. Catalyzes the dehydration of short chain beta-hydroxyacyl-ACPs and long chain saturated and unsaturated beta-hydroxyacyl-ACPs. The protein is 3-hydroxyacyl-[acyl-carrier-protein] dehydratase FabZ of Listeria innocua serovar 6a (strain ATCC BAA-680 / CLIP 11262).